A 600-amino-acid chain; its full sequence is Molybdenum cofactor biosynthesis protein moc-5 (600 aa).

The interval 4–371 (RAGKKLFQWS…AVNNKKARHA (368 aa)) is molybdenum cofactor biosynthesis protein A. Residues 68–284 (MFMREHTYLR…VDKYGDGVIR (217 aa)) form the Radical SAM core domain. Arg77 contributes to the GTP binding site. The [4Fe-4S] cluster site is built by Cys84 and Cys88. Residue Tyr90 coordinates S-adenosyl-L-methionine. Cys91 lines the [4Fe-4S] cluster pocket. Residue Arg127 coordinates GTP. Gly131 contacts S-adenosyl-L-methionine. Thr158 lines the GTP pocket. Ser182 is a binding site for S-adenosyl-L-methionine. A GTP-binding site is contributed by Lys218. S-adenosyl-L-methionine is bound at residue Met252. Residues Cys316 and Cys319 each coordinate [4Fe-4S] cluster. 321-323 (RLR) contacts GTP. Cys333 contacts [4Fe-4S] cluster. The disordered stretch occupies residues 369 to 390 (RHAVFRNGRSEEPAKSSNDSYR). The molybdenum cofactor biosynthesis protein C stretch occupies residues 396-595 (TSASSILVHL…SGGKTTYTID (200 aa)). The active-site For molybdenum cofactor biosynthesis protein C activity is Asp566.

It in the C-terminal section; belongs to the MoaC family. The protein in the N-terminal section; belongs to the radical SAM superfamily. MoaA family. As to quaternary structure, isoform a and isoform b probably form a heterooligomer. It depends on [4Fe-4S] cluster as a cofactor.

The catalysed reaction is GTP + AH2 + S-adenosyl-L-methionine = (8S)-3',8-cyclo-7,8-dihydroguanosine 5'-triphosphate + 5'-deoxyadenosine + L-methionine + A + H(+). It carries out the reaction (8S)-3',8-cyclo-7,8-dihydroguanosine 5'-triphosphate = cyclic pyranopterin phosphate + diphosphate. It functions in the pathway cofactor biosynthesis; molybdopterin biosynthesis. Its function is as follows. Probably forms a complex with isoform b that catalyzes the conversion of 5'-GTP to cyclic pyranopterin monophosphate (cPMP). Catalyzes the cyclization of GTP to (8S)-3',8-cyclo-7,8-dihydroguanosine 5'-triphosphate and mocs1b catalyzes the subsequent conversion of (8S)-3',8-cyclo-7,8-dihydroguanosine 5'-triphosphate to cPMP. Probably forms a complex with isoform a that catalyzes the conversion of 5'-GTP to cyclic pyranopterin monophosphate (cPMP). In Caenorhabditis elegans, this protein is Molybdenum cofactor biosynthesis protein moc-5.